Here is a 440-residue protein sequence, read N- to C-terminus: MQAYFDQLDRVRYEGPQSTNPLAFRHYNPDELVLGKRMEDHLRFAACYWHTFCWNGADMFGVGAFNRPWQQPGEALELAKRKADVAFEFFHKLNVPFYCFHDVDVSPKGASLKEYKNNFAQMVDVLAAKQEQSGVKLLWGTANCFTNPRYGAGAATNPDPEVFSCAATQVVTAMNATHKLGGENYVLWGGREGYETLLNTDLRQEREQIGRFMQMVVEHKHKMGFQGTLLIEPKPQEPTKHQYDYDVATVYGFLKQFGLEKEIKVNIEANHATLAGHSFHHEIATAIALGIFGSVDANRGDAQLGWDTDQFPISVEENALVMYEILKAGGFTTGGLNFDAKVRRQSTDKYDLFYGHIGAMDTMALSLKIAARMVEDGELDKRVAKRYAGWNGELGQQILKGQLSLGELAQYAEQHHLAPVHQSGHQELLENLVNRYLFDK.

Catalysis depends on residues His101 and Asp104. Residues Glu232, Glu268, His271, Asp296, Asp307, Asp309, and Asp339 each contribute to the Mg(2+) site.

This sequence belongs to the xylose isomerase family. Homotetramer. Mg(2+) is required as a cofactor.

The protein localises to the cytoplasm. It catalyses the reaction alpha-D-xylose = alpha-D-xylulofuranose. The protein is Xylose isomerase of Salmonella typhi.